The following is a 197-amino-acid chain: Glycerol-3-phosphate acyltransferase (197 aa).

The next 4 membrane-spanning stretches (helical) occupy residues 5–25 (LILITAYLLGSIPFALLVGKI), 70–90 (LPVLFSVHIHPLLAGVCAVIG), 111–131 (VMLFYSPFLFVSLLTVFFIVL), and 153–173 (IFFTDDIPLMIAVSLLTAFIF).

The protein belongs to the PlsY family. In terms of assembly, probably interacts with PlsX.

It localises to the cell membrane. The catalysed reaction is an acyl phosphate + sn-glycerol 3-phosphate = a 1-acyl-sn-glycero-3-phosphate + phosphate. It functions in the pathway lipid metabolism; phospholipid metabolism. Catalyzes the transfer of an acyl group from acyl-phosphate (acyl-PO(4)) to glycerol-3-phosphate (G3P) to form lysophosphatidic acid (LPA). This enzyme utilizes acyl-phosphate as fatty acyl donor, but not acyl-CoA or acyl-ACP. This chain is Glycerol-3-phosphate acyltransferase, found in Geobacillus sp. (strain WCH70).